Consider the following 131-residue polypeptide: Profilin-6 (131 aa).

A disulfide bridge connects residues C13 and C115. The short motif at 81 to 97 (AVIRGKKGAGGITIKKT) is the Involved in PIP2 interaction element. Position 111 is a phosphothreonine (T111).

Belongs to the profilin family. In terms of assembly, occurs in many kinds of cells as a complex with monomeric actin in a 1:1 ratio. Post-translationally, phosphorylated by MAP kinases.

The protein localises to the cytoplasm. It localises to the cytoskeleton. Binds to actin and affects the structure of the cytoskeleton. At high concentrations, profilin prevents the polymerization of actin, whereas it enhances it at low concentrations. The chain is Profilin-6 from Phleum pratense (Common timothy).